The chain runs to 223 residues: MSSAISRSRFNSFILHTVATANLIWAFNWINHNSDVAIRRSYGSHFQHLTVLSLAVTLLSMVVGLFSDISGSLTLVKLKNILLYIVCPLETIVSILYWSIVSYDRSLLIPKDRPVPLPLNFDISVHLMPTVYTLIDYLFFSPPFSLSIGPSLLVYLSIAVSYMLWVEKCYQMNKFYAYPILAILDPIKKTIFYTVASIISFSCYIVLKMVHPYALPSGAPPRS.

5 helical membrane-spanning segments follow: residues 10–30, 49–69, 81–101, 146–166, and 190–210; these read FNSF…FNWI, LTVL…FSDI, ILLY…WSIV, LSIG…MLWV, and TIFY…LKMV.

The protein belongs to the UPF0641 family.

The protein resides in the endoplasmic reticulum membrane. The polypeptide is UPF0641 membrane protein PJ4664.05 (Schizosaccharomyces pombe (strain 972 / ATCC 24843) (Fission yeast)).